Here is a 613-residue protein sequence, read N- to C-terminus: Leucine-rich repeat receptor-like protein FASCIATED EAR2 (613 aa).

An N-terminal signal peptide occupies residues 1 to 28; sequence MLTATPLPHQLLATFLLVLASATQPAVP. Over 29–573 the chain is Extracellular; sequence ASTDRAALLA…WLGGWHGENG (545 aa). LRR repeat units follow at residues 79–103, 104–128, 130–150, 151–176, 178–199, 202–226, 227–250, 251–274, 276–297, 298–322, 324–346, 347–370, 372–394, 435–459, 460–483, 484–507, and 508–531; these read TPSVAELSLRGLNLTGVIPAAPLAL, LRRLRTLDLSANALSGELPCSLPRS, LALDLSRNALSGAVPTCLPSS, LPALRTLNLSANFLRLPLSPRLSFPA, LAALDLSRNAISGAVPPRIVAD, NSALLLLDLSHNRFSGEIPAGIAAV, RSLQGLFLADNQLSGDIPPGIGNL, TYLQVLDLSNNRLSGSVPAGLAGC, QLLYLQLGGNQLSGALRPELDA, LASLKVLDLSNNKISGEIPLPLAGC, SLEVVDLSGNEISGELSSAVAKW, LSLKFLSLAGNQLSGHLPDWMFSF, LLQWLDLSSNKFVGFIPDGGFNV, VQATTGIDLSGNELCGEIPEGLVDM, KGLEYLNLSCNYLAGQIPAGLGGM, GRLHTLDFSHNGLSGEVPPGIAAM, and TVLEVLNLSYNSLSGPLPTTKFPG. An N-linked (GlcNAc...) asparagine glycan is attached at asparagine 91. N-linked (GlcNAc...) asparagine glycosylation is present at asparagine 158. Asparagine 249 carries an N-linked (GlcNAc...) asparagine glycan. N-linked (GlcNAc...) asparagine glycosylation occurs at asparagine 393. N-linked (GlcNAc...) asparagine glycosylation occurs at asparagine 466. The N-linked (GlcNAc...) asparagine glycan is linked to asparagine 514. Residues 574 to 597 form a helical membrane-spanning segment; it reads WVSLGAFCISTMTSFYVSLATLLC. Topologically, residues 598 to 613 are cytoplasmic; sequence SSNARNFVFRPVRVEY.

Expressed in ear primordia, vegetative apex and young leaf tissues. Barely detected in expanded leaf tissues and not expressed in roots.

It is found in the cell membrane. Functionally, receptor-like protein that regulates shoot meristem proliferation. Based on additive and synergistic phenotypes of double mutants, it is probable that unlike CLV1 and CLV2 in A.thaliana, FAE2 and TD1 do not function exclusively in a single pathway. In Zea mays (Maize), this protein is Leucine-rich repeat receptor-like protein FASCIATED EAR2 (FEA2).